A 335-amino-acid polypeptide reads, in one-letter code: Nod factor export ATP-binding protein I (335 aa).

The 231-residue stretch at 37-267 (IDVASVTKSY…KIGCQVIEIY (231 aa)) folds into the ABC transporter domain. 69-76 (GPNGAGKS) contacts ATP.

The protein belongs to the ABC transporter superfamily. Lipooligosaccharide exporter (TC 3.A.1.102) family. The complex is composed of two ATP-binding proteins (NodI) and two transmembrane proteins (NodJ).

It localises to the cell inner membrane. In terms of biological role, part of the ABC transporter complex NodIJ involved in the export of the nodulation factors (Nod factors), the bacterial signal molecules that induce symbiosis and subsequent nodulation induction. Nod factors are LCO (lipo-chitin oligosaccharide), a modified beta-1,4-linked N-acetylglucosamine oligosaccharide. This subunit is responsible for energy coupling to the transport system. The polypeptide is Nod factor export ATP-binding protein I (Rhizobium meliloti (strain 1021) (Ensifer meliloti)).